Reading from the N-terminus, the 253-residue chain is DnaJ homolog subfamily C member 8 (253 aa).

An N-acetylalanine modification is found at A2. A Phosphoserine modification is found at S35. The region spanning 57–124 (NPFEVLQIDP…QKKRALDVIQ (68 aa)) is the J domain. Position 146 is an N6-acetyllysine (K146). Residues 181–222 (EAKEMHERKRQREEEIEAQEKAKREREWQKNFEESRDGRVDS) show a composition bias toward basic and acidic residues. The interval 181 to 253 (EAKEMHERKR…PPKVKMEQRE (73 aa)) is disordered. 2 short sequence motifs (nuclear localization signal) span residues 189-192 (KRQR) and 203-206 (KRER). Residue S222 is modified to Phosphoserine. The span at 231–240 (KGKKEKKNRT) shows a compositional bias: basic residues. Residues 232-253 (GKKEKKNRTFLRPPKVKMEQRE) form an essential for polyglutamine aggregation suppression region.

As to quaternary structure, interacts with SRPK1. Interacts with HSP70 (HSPA1A or HSPA1B).

The protein localises to the nucleus. Its function is as follows. Suppresses polyglutamine (polyQ) aggregation of ATXN3 in neuronal cells. This chain is DnaJ homolog subfamily C member 8 (Dnajc8), found in Mus musculus (Mouse).